A 368-amino-acid polypeptide reads, in one-letter code: Phosphate acyltransferase (368 aa).

The disordered stretch occupies residues 334-368; that stretch reads AAPLGESGRDANGAGQASPSAGQPAEPSAALSSKT.

The protein belongs to the PlsX family. Homodimer. Probably interacts with PlsY.

It is found in the cytoplasm. It catalyses the reaction a fatty acyl-[ACP] + phosphate = an acyl phosphate + holo-[ACP]. It participates in lipid metabolism; phospholipid metabolism. Catalyzes the reversible formation of acyl-phosphate (acyl-PO(4)) from acyl-[acyl-carrier-protein] (acyl-ACP). This enzyme utilizes acyl-ACP as fatty acyl donor, but not acyl-CoA. The chain is Phosphate acyltransferase from Burkholderia pseudomallei (strain 1106a).